A 154-amino-acid chain; its full sequence is Urease subunit alpha (154 aa).

The Urease domain occupies 38-154 (GGIDTHIHFI…ADEMDIQVAI (117 aa)). 3 residues coordinate Ni(2+): His43, His45, and Lys126. N6-carboxylysine is present on Lys126. His128 is a binding site for substrate.

Belongs to the metallo-dependent hydrolases superfamily. Urease alpha subunit family. In terms of assembly, heterotrimer of UreA (gamma), UreB (beta) and UreC (alpha) subunits. Three heterotrimers associate to form the active enzyme. The cofactor is Ni cation. Post-translationally, carboxylation allows a single lysine to coordinate two nickel ions.

Its subcellular location is the cytoplasm. It carries out the reaction urea + 2 H2O + H(+) = hydrogencarbonate + 2 NH4(+). The protein operates within nitrogen metabolism; urea degradation; CO(2) and NH(3) from urea (urease route): step 1/1. The polypeptide is Urease subunit alpha (ureC) (Photobacterium damselae subsp. damselae (Listonella damsela)).